A 162-amino-acid chain; its full sequence is Shikimate kinase (162 aa).

Position 11–16 (11–16 (GSGKSS)) interacts with ATP. Residue serine 15 participates in Mg(2+) binding. Positions 33, 57, and 80 each coordinate substrate. Arginine 116 serves as a coordination point for ATP. A substrate-binding site is contributed by arginine 132.

It belongs to the shikimate kinase family. In terms of assembly, monomer. Mg(2+) serves as cofactor.

The protein resides in the cytoplasm. It catalyses the reaction shikimate + ATP = 3-phosphoshikimate + ADP + H(+). It participates in metabolic intermediate biosynthesis; chorismate biosynthesis; chorismate from D-erythrose 4-phosphate and phosphoenolpyruvate: step 5/7. Catalyzes the specific phosphorylation of the 3-hydroxyl group of shikimic acid using ATP as a cosubstrate. In Helicobacter acinonychis (strain Sheeba), this protein is Shikimate kinase.